Here is a 269-residue protein sequence, read N- to C-terminus: Zinc transporter ZupT (269 aa).

8 helical membrane passes run 11–31 (IALA…LLVL), 40–60 (LLAF…LSEI), 80–100 (YGTL…HFIP), 125–145 (ALLT…ATFF), 158–178 (AFAI…PVYF), 187–207 (FSAS…GYWL), 217–237 (FGWV…DELL), and 249–269 (TVYG…LFKW). Positions 136 and 139 each coordinate Fe(2+). Zn(2+)-binding residues include Glu-139 and His-164. The Fe(2+) site is built by Asn-165, Glu-168, and Glu-197. Glu-168 is a binding site for Zn(2+).

This sequence belongs to the ZIP transporter (TC 2.A.5) family. ZupT subfamily.

It localises to the cell inner membrane. It carries out the reaction Zn(2+)(in) = Zn(2+)(out). Functionally, mediates zinc uptake. May also transport other divalent cations. The protein is Zinc transporter ZupT of Stenotrophomonas maltophilia (strain K279a).